We begin with the raw amino-acid sequence, 358 residues long: Popeye domain-containing protein 1 (358 aa).

Topologically, residues 1–48 (MNSTESIPLAQSTVAGFTSELESLTPVPSNETTCENWREIHHLVFHVA) are extracellular. N-linked (GlcNAc...) asparagine glycosylation is found at asparagine 2 and asparagine 30. Residues 49–69 (NVCFAVGLLIPTTLHLHMILL) form a helical membrane-spanning segment. Position 70 (arginine 70) is a topological domain, cytoplasmic. The chain crosses the membrane as a helical span at residues 71-91 (VMLSLGCTLYVVWATLYRCAL). Position 92 (aspartate 92) is a topological domain, extracellular. A helical transmembrane segment spans residues 93–113 (VMIWNSVFLGINILHLSYLLY). Residues 93–115 (VMIWNSVFLGINILHLSYLLYKK) form a required for interaction with CAV3 region. At 114–358 (KKRPVKIEKE…PDALKVHQLP (245 aa)) the chain is on the cytoplasmic side. The required for interaction with KCNK2 stretch occupies residues 136 to 186 (RVPPDLFRRLTGQFCMIQTLKRGQVYATEDKTSVDDRLSILLKGRMKVSYR). 2 positions are modified to phosphoserine: serine 295 and serine 318. Over residues 313–323 (SSSTASLPMSS) the composition is skewed to low complexity. The tract at residues 313-350 (SSSTASLPMSSPQQRASAKMKPIEEGVEDDDEVFVSPD) is disordered.

It belongs to the popeye family. As to quaternary structure, homodimer. Homodimerization requires the C-terminus cytoplasmic region. Interacts (via the C-terminus cytoplasmic tail) with TJP1. Interacts (via the C-terminus cytoplasmic tail) with ARHGEF25/GEFT (via the DH domain). Interacts (via the C-terminus cytoplasmic tail) with VAMP3. Interacts with KCNK2; the interaction enhances KCNK2 surface expression and is inhibited by cAMP. Interacts with CAV3. Expressed in epithelial cells, skeletal muscle, heart and intestinal smooth muscle (at protein level). Expressed in fetal and adult heart and skeletal muscle.

Its subcellular location is the lateral cell membrane. It is found in the cell junction. The protein resides in the tight junction. The protein localises to the membrane. It localises to the cell membrane. Its subcellular location is the sarcolemma. It is found in the caveola. In terms of biological role, cell adhesion molecule involved in the establishment and/or maintenance of cell integrity. Involved in the formation and regulation of the tight junction (TJ) paracellular permeability barrier in epithelial cells. Plays a role in VAMP3-mediated vesicular transport and recycling of different receptor molecules through its interaction with VAMP3. Plays a role in the regulation of cell shape and movement by modulating the Rho-family GTPase activity through its interaction with ARHGEF25/GEFT. Induces primordial adhesive contact and aggregation of epithelial cells in a Ca(2+)-independent manner. Also involved in striated muscle regeneration and repair and in the regulation of cell spreading. Important for the maintenance of cardiac function. Plays a regulatory function in heart rate dynamics mediated, at least in part, through cAMP-binding and, probably, by increasing cell surface expression of the potassium channel KCNK2 and enhancing current density. Is a caveolae-associated protein important for the preservation of caveolae structural and functional integrity as well as for heart protection against ischemia injury. The protein is Popeye domain-containing protein 1 of Mus musculus (Mouse).